The following is a 210-amino-acid chain: 7-carboxy-7-deazaguanine synthase (210 aa).

Residues 25-27 and arginine 40 contribute to the substrate site; that span reads IQG. The 180-residue stretch at 31–210 folds into the Radical SAM core domain; sequence HTGTAAYFIR…LQTHKYLNIP (180 aa). Residues cysteine 44, cysteine 48, and cysteine 51 each contribute to the [4Fe-4S] cluster site. Threonine 84 serves as a coordination point for substrate. Residues glycine 86 and 127 to 129 contribute to the S-adenosyl-L-methionine site; that span reads SPK. Proline 210 is a substrate binding site.

Belongs to the radical SAM superfamily. 7-carboxy-7-deazaguanine synthase family. In terms of assembly, homodimer. [4Fe-4S] cluster is required as a cofactor. It depends on S-adenosyl-L-methionine as a cofactor. The cofactor is Mg(2+).

The catalysed reaction is 6-carboxy-5,6,7,8-tetrahydropterin + H(+) = 7-carboxy-7-deazaguanine + NH4(+). The protein operates within purine metabolism; 7-cyano-7-deazaguanine biosynthesis. Functionally, catalyzes the complex heterocyclic radical-mediated conversion of 6-carboxy-5,6,7,8-tetrahydropterin (CPH4) to 7-carboxy-7-deazaguanine (CDG), a step common to the biosynthetic pathways of all 7-deazapurine-containing compounds. This is 7-carboxy-7-deazaguanine synthase from Flavobacterium psychrophilum (strain ATCC 49511 / DSM 21280 / CIP 103535 / JIP02/86).